We begin with the raw amino-acid sequence, 438 residues long: Trigger factor (438 aa).

Residues 162–247 (GDRVNINYQG…LNKVEAPKLP (86 aa)) form the PPIase FKBP-type domain.

This sequence belongs to the FKBP-type PPIase family. Tig subfamily.

The protein resides in the cytoplasm. The catalysed reaction is [protein]-peptidylproline (omega=180) = [protein]-peptidylproline (omega=0). Involved in protein export. Acts as a chaperone by maintaining the newly synthesized protein in an open conformation. Functions as a peptidyl-prolyl cis-trans isomerase. The chain is Trigger factor from Nitrosomonas eutropha (strain DSM 101675 / C91 / Nm57).